Here is a 330-residue protein sequence, read N- to C-terminus: Lactamase-like protein nscB (330 aa).

His97, His99, Asp101, and His102 together coordinate Zn(2+). Asp101 (proton donor/acceptor) is an active-site residue.

Belongs to the metallo-beta-lactamase superfamily. It depends on Zn(2+) as a cofactor.

It functions in the pathway secondary metabolite biosynthesis. Its function is as follows. Lactamase-like protein; part of the gene cluster that mediates the biosynthesis of neosartoricin, a prenylated anthracenone that exhibits T-cell antiproliferative activity, suggestive of a physiological role as an immunosuppressive agent. The non-reducing polyketide synthase nscA probably synthesizes and cyclizes the decaketide backbone. The hydrolase nscB then mediates the product release through hydrolysis followed by spontaneous decarboxylation. The prenyltransferase nscD catalyzes the addition of the dimethylallyl group to the aromatic C5. The FAD-dependent monooxygenase nscC is then responsible for the stereospecific hydroxylation at C2. There is no gene encoding O-acetyltransferase in the nsc gene cluster; thus, the last step of 2-O-acetylation leading to neosartoricin may be catalyzed by an unidentified O-acetyltransferase. The sequence is that of Lactamase-like protein nscB from Aspergillus fumigatus (strain ATCC MYA-4609 / CBS 101355 / FGSC A1100 / Af293) (Neosartorya fumigata).